A 98-amino-acid chain; its full sequence is DNA-binding protein Fis (98 aa).

Positions 74–93 (QTRAALMMGINRGTLRKKLK) form a DNA-binding region, H-T-H motif.

It belongs to the transcriptional regulatory Fis family. As to quaternary structure, homodimer.

Its function is as follows. Activates ribosomal RNA transcription. Plays a direct role in upstream activation of rRNA promoters. This is DNA-binding protein Fis from Photorhabdus laumondii subsp. laumondii (strain DSM 15139 / CIP 105565 / TT01) (Photorhabdus luminescens subsp. laumondii).